A 307-amino-acid polypeptide reads, in one-letter code: Nucleotide-binding protein ACP_0619 (307 aa).

Residues 1 to 14 (MPAPEPTRRAKKDA) show a composition bias toward basic and acidic residues. The disordered stretch occupies residues 1–23 (MPAPEPTRRAKKDASASPSPAHP). Position 33–40 (33–40 (GLSGAGKG)) interacts with ATP. Residue 83-86 (DVRE) coordinates GTP.

The protein belongs to the RapZ-like family.

Functionally, displays ATPase and GTPase activities. In Acidobacterium capsulatum (strain ATCC 51196 / DSM 11244 / BCRC 80197 / JCM 7670 / NBRC 15755 / NCIMB 13165 / 161), this protein is Nucleotide-binding protein ACP_0619.